The following is a 197-amino-acid chain: Large ribosomal subunit protein bL25 (197 aa).

The protein belongs to the bacterial ribosomal protein bL25 family. CTC subfamily. In terms of assembly, part of the 50S ribosomal subunit; part of the 5S rRNA/L5/L18/L25 subcomplex. Contacts the 5S rRNA. Binds to the 5S rRNA independently of L5 and L18.

In terms of biological role, this is one of the proteins that binds to the 5S RNA in the ribosome where it forms part of the central protuberance. This chain is Large ribosomal subunit protein bL25, found in Hydrogenobaculum sp. (strain Y04AAS1).